The following is a 460-amino-acid chain: Cation efflux system protein CusC (460 aa).

The first 17 residues, 1-17 (MSPCKLLPFCVALALTG), serve as a signal peptide directing secretion. Cysteine 18 carries N-palmitoyl cysteine lipidation. Cysteine 18 carries the S-diacylglycerol cysteine lipid modification.

This sequence belongs to the outer membrane factor (OMF) (TC 1.B.17) family. In terms of assembly, homotrimer. Component of the cus efflux system composed of CusA, CusB, CusC and CusF.

It localises to the cell outer membrane. In terms of biological role, forms pores that allow passive diffusion of cations across the outer membrane. Part of a cation efflux system that mediates resistance to copper and silver. This is Cation efflux system protein CusC (cusC) from Escherichia coli O6:H1 (strain CFT073 / ATCC 700928 / UPEC).